The sequence spans 339 residues: D-erythrose-4-phosphate dehydrogenase (339 aa).

Residues 12-13 and Arg81 contribute to the NAD(+) site; that span reads RI. Substrate is bound by residues 154–156, Arg200, 213–214, and Arg236; these read SCT and TK. Cys155 functions as the Nucleophile in the catalytic mechanism. Position 318 (Asn318) interacts with NAD(+).

It belongs to the glyceraldehyde-3-phosphate dehydrogenase family. Epd subfamily. As to quaternary structure, homotetramer.

It localises to the cytoplasm. It carries out the reaction D-erythrose 4-phosphate + NAD(+) + H2O = 4-phospho-D-erythronate + NADH + 2 H(+). The protein operates within cofactor biosynthesis; pyridoxine 5'-phosphate biosynthesis; pyridoxine 5'-phosphate from D-erythrose 4-phosphate: step 1/5. Catalyzes the NAD-dependent conversion of D-erythrose 4-phosphate to 4-phosphoerythronate. The polypeptide is D-erythrose-4-phosphate dehydrogenase (Shigella dysenteriae serotype 1 (strain Sd197)).